The chain runs to 404 residues: Zinc metalloprotease Rip1 (404 aa).

A helical transmembrane segment spans residues 1–21; the sequence is MMFVTGIVLFALAILISVALH. Residue His21 participates in Zn(2+) binding. Glu22 is a catalytic residue. His25 provides a ligand contact to Zn(2+). Residues 104–124 form a helical membrane-spanning segment; it reads PGMNLAICLVLIYAIALVWGL. The PDZ domain occupies 121–203; the sequence is VWGLPNLHPP…SVPIVVERDG (83 aa). Asp202 contributes to the Zn(2+) binding site. Helical transmembrane passes span 313-333 and 373-393; these read LWVA…AINL and LLPA…LTVT.

It belongs to the peptidase M50B family. Requires Zn(2+) as cofactor.

The protein localises to the cell membrane. A probable site-2 protease (S2P) that cleaves type-2 transmembrane proteins within their membrane-spanning domains. Degrades anti-sigma factors RskA, RslA and RsmA, releasing sigma factors SigK, SigL and SigM from the cellular membrane, activating signaling pathways. Does not act on RsdA. Regulates the composition of extractable mycolic acids in the cell envelope in response to changes in membrane fluidity. Mediates transcriptional regulation of mycolic acid biosynthetic genes in response to detergent. Probably also cleaves PbpB (PBP3, FtsI); this cleavage is inhibited by Wag31-PbpBI interaction. In terms of biological role, regulated intramembrane proteolysis (RIP) occurs when an extracytoplasmic signal (possibly oxidative stress) triggers a concerted proteolytic cascade to transmit information and elicit cellular responses. The membrane-spanning regulatory substrate protein (includes anti-sigma factors RskA, RslA, RsmA, and PbpB) is first cut extracytoplasmically (site-1 protease, S1P), then within the membrane itself (site-2 protease, S2P, this entry), while cytoplasmic proteases finish degrading the regulatory protein, liberating the effector protein (ECF sigma factors SigK, SigL and SigM). This is Zinc metalloprotease Rip1 (rip1) from Mycobacterium tuberculosis (strain ATCC 35801 / TMC 107 / Erdman).